We begin with the raw amino-acid sequence, 289 residues long: Deoxyuridine 5'-triphosphate nucleotidohydrolase (289 aa).

Substrate-binding positions include 176-178 and 283-284; these read RSG and FG.

The protein belongs to the dUTPase family. It depends on Mg(2+) as a cofactor.

The catalysed reaction is dUTP + H2O = dUMP + diphosphate + H(+). Involved in nucleotide metabolism: produces dUMP, the immediate precursor of thymidine nucleotides and decreases the intracellular concentration of dUTP to avoid uracil incorporation into viral DNA. In Equus caballus (Horse), this protein is Deoxyuridine 5'-triphosphate nucleotidohydrolase.